The sequence spans 479 residues: Glutamyl-tRNA(Gln) amidotransferase subunit A (479 aa).

Residues K74 and S149 each act as charge relay system in the active site. S173 serves as the catalytic Acyl-ester intermediate.

The protein belongs to the amidase family. GatA subfamily. In terms of assembly, heterotrimer of A, B and C subunits.

The catalysed reaction is L-glutamyl-tRNA(Gln) + L-glutamine + ATP + H2O = L-glutaminyl-tRNA(Gln) + L-glutamate + ADP + phosphate + H(+). In terms of biological role, allows the formation of correctly charged Gln-tRNA(Gln) through the transamidation of misacylated Glu-tRNA(Gln) in organisms which lack glutaminyl-tRNA synthetase. The reaction takes place in the presence of glutamine and ATP through an activated gamma-phospho-Glu-tRNA(Gln). This chain is Glutamyl-tRNA(Gln) amidotransferase subunit A, found in Cenarchaeum symbiosum (strain A).